We begin with the raw amino-acid sequence, 35 residues long: uncharacterized protein (35 aa).

The chain crosses the membrane as a helical span at residues 10-30 (LMITASFFAIFIIIVVSVLLL).

Its subcellular location is the membrane. This is an uncharacterized protein from Salmonella typhimurium (strain LT2 / SGSC1412 / ATCC 700720).